The primary structure comprises 369 residues: Phenylalanine--tRNA ligase alpha subunit (369 aa).

Glutamate 269 contributes to the Mg(2+) binding site.

The protein belongs to the class-II aminoacyl-tRNA synthetase family. Phe-tRNA synthetase alpha subunit type 1 subfamily. In terms of assembly, tetramer of two alpha and two beta subunits. It depends on Mg(2+) as a cofactor.

The protein resides in the cytoplasm. It catalyses the reaction tRNA(Phe) + L-phenylalanine + ATP = L-phenylalanyl-tRNA(Phe) + AMP + diphosphate + H(+). This Brucella canis (strain ATCC 23365 / NCTC 10854 / RM-666) protein is Phenylalanine--tRNA ligase alpha subunit.